A 171-amino-acid chain; its full sequence is MERHGVAAPPVELKDQEPPAIVESGEHRQSENHEETPGSVAPSASCQLPGPFSSLDSSIETLKKKAQELIENINESRQKDHALMTNFRDSLKMKVSDLTEKLEERMYQVYSHHSKIIQERLQEFTQKMAKINHLEMELKQVCQTVETVYKDLCVQSEVPTCEEQNYKDGEC.

The interval 1-52 (MERHGVAAPPVELKDQEPPAIVESGEHRQSENHEETPGSVAPSASCQLPGPF) is disordered. The segment covering 24–36 (SGEHRQSENHEET) has biased composition (basic and acidic residues). Coiled-coil stretches lie at residues 52 to 83 (FSSL…DHAL) and 118 to 146 (QERL…QTVE).

It belongs to the SYCE family. As to quaternary structure, homodimer. Found in a complex with SYCP1 and SYCE1. Interacts with SYCP1 and SYCE1. Interacts with SYCE3. Interacts with TEX12. Meiotic cells (at protein level). Expressed in the ovary and testis.

The protein localises to the nucleus. The protein resides in the chromosome. Functionally, major component of the transverse central element of synaptonemal complexes (SCS), formed between homologous chromosomes during meiotic prophase. Requires SYCP1 in order to be incorporated into the central element. May have a role in the synaptonemal complex assembly, stabilization and recombination. This is Synaptonemal complex central element protein 2 (Syce2) from Mus musculus (Mouse).